The primary structure comprises 360 residues: Photosystem II protein D1 2 (360 aa).

The next 3 membrane-spanning stretches (helical) occupy residues 29-46 (YIGWFGVLMIPTLLAATT), 118-133 (HFLTGVFCYLGREWEL), and 142-156 (WICLAFSAPVAAATA). His-118 serves as a coordination point for chlorophyll a. Residue Tyr-126 coordinates pheophytin a. 2 residues coordinate [CaMn4O5] cluster: Asp-170 and Glu-189. A helical membrane pass occupies residues 197–218 (FHMLGVAGVFGGSLFSAMHGSL). A chlorophyll a-binding site is contributed by His-198. Residues His-215 and 264–265 (SF) each bind a quinone. His-215 serves as a coordination point for Fe cation. His-272 serves as a coordination point for Fe cation. The helical transmembrane segment at 274 to 288 (FLAAWPVIGIWFTAL) threads the bilayer. 4 residues coordinate [CaMn4O5] cluster: His-332, Glu-333, Asp-342, and Ala-344. Residues 345–360 (AGEVAPVALTAPAING) constitute a propeptide that is removed on maturation.

It belongs to the reaction center PufL/M/PsbA/D family. In terms of assembly, PSII is composed of 1 copy each of membrane proteins PsbA, PsbB, PsbC, PsbD, PsbE, PsbF, PsbH, PsbI, PsbJ, PsbK, PsbL, PsbM, PsbT, PsbX, PsbY, PsbZ, Psb30/Ycf12, peripheral proteins PsbO, CyanoQ (PsbQ), PsbU, PsbV and a large number of cofactors. It forms dimeric complexes. Requires The D1/D2 heterodimer binds P680, chlorophylls that are the primary electron donor of PSII, and subsequent electron acceptors. It shares a non-heme iron and each subunit binds pheophytin, quinone, additional chlorophylls, carotenoids and lipids. D1 provides most of the ligands for the Mn4-Ca-O5 cluster of the oxygen-evolving complex (OEC). There is also a Cl(-1) ion associated with D1 and D2, which is required for oxygen evolution. The PSII complex binds additional chlorophylls, carotenoids and specific lipids. as cofactor. Tyr-161 forms a radical intermediate that is referred to as redox-active TyrZ, YZ or Y-Z. In terms of processing, C-terminally processed by CtpA; processing is essential to allow assembly of the oxygen-evolving complex and thus photosynthetic growth.

It is found in the cellular thylakoid membrane. It catalyses the reaction 2 a plastoquinone + 4 hnu + 2 H2O = 2 a plastoquinol + O2. Functionally, photosystem II (PSII) is a light-driven water:plastoquinone oxidoreductase that uses light energy to abstract electrons from H(2)O, generating O(2) and a proton gradient subsequently used for ATP formation. It consists of a core antenna complex that captures photons, and an electron transfer chain that converts photonic excitation into a charge separation. The D1/D2 (PsbA/PsbD) reaction center heterodimer binds P680, the primary electron donor of PSII as well as several subsequent electron acceptors. In Trichormus variabilis (strain ATCC 29413 / PCC 7937) (Anabaena variabilis), this protein is Photosystem II protein D1 2.